We begin with the raw amino-acid sequence, 161 residues long: Allophycocyanin alpha chain (161 aa).

Position 71 is an N4-methylasparagine (Asn71). Cys81 contributes to the (2R,3E)-phycocyanobilin binding site.

Belongs to the phycobiliprotein family. As to quaternary structure, heterodimer of an alpha and a beta chain. In terms of processing, contains one covalently linked phycocyanobilin chromophore.

The protein localises to the plastid. The protein resides in the chloroplast thylakoid membrane. Functionally, light-harvesting photosynthetic bile pigment-protein from the phycobiliprotein complex. Allophycocyanin has a maximum absorption at approximately 650 nanometers. The polypeptide is Allophycocyanin alpha chain (apcA) (Pyropia haitanensis (Red seaweed)).